The following is a 453-amino-acid chain: Serine--tRNA ligase (453 aa).

An L-serine-binding site is contributed by 249–251 (TSE). ATP-binding positions include 280-282 (RKE) and V296. E303 is a binding site for L-serine. ATP is bound at residue 367–370 (EMVS). T404 contacts L-serine.

This sequence belongs to the class-II aminoacyl-tRNA synthetase family. Type-1 seryl-tRNA synthetase subfamily. Homodimer. The tRNA molecule binds across the dimer.

The protein localises to the cytoplasm. It carries out the reaction tRNA(Ser) + L-serine + ATP = L-seryl-tRNA(Ser) + AMP + diphosphate + H(+). The enzyme catalyses tRNA(Sec) + L-serine + ATP = L-seryl-tRNA(Sec) + AMP + diphosphate + H(+). The protein operates within aminoacyl-tRNA biosynthesis; selenocysteinyl-tRNA(Sec) biosynthesis; L-seryl-tRNA(Sec) from L-serine and tRNA(Sec): step 1/1. Catalyzes the attachment of serine to tRNA(Ser). Is also able to aminoacylate tRNA(Sec) with serine, to form the misacylated tRNA L-seryl-tRNA(Sec), which will be further converted into selenocysteinyl-tRNA(Sec). This Archaeoglobus fulgidus (strain ATCC 49558 / DSM 4304 / JCM 9628 / NBRC 100126 / VC-16) protein is Serine--tRNA ligase.